The following is a 450-amino-acid chain: uncharacterized protein (450 aa).

Lys283 carries the post-translational modification N6-(pyridoxal phosphate)lysine.

It belongs to the class-III pyridoxal-phosphate-dependent aminotransferase family. Pyridoxal 5'-phosphate is required as a cofactor.

Essential for glycerol catabolism. This is an uncharacterized protein from Bacillus subtilis (strain 168).